Consider the following 252-residue polypeptide: Probable transcriptional regulatory protein Cagg_2594 (252 aa).

Over residues methionine 1–lysine 14 the composition is skewed to basic residues. The segment at methionine 1–glycine 22 is disordered.

The protein belongs to the TACO1 family.

The protein localises to the cytoplasm. The protein is Probable transcriptional regulatory protein Cagg_2594 of Chloroflexus aggregans (strain MD-66 / DSM 9485).